The following is a 183-amino-acid chain: Translocon-associated protein subunit beta (183 aa).

The N-terminal stretch at 1 to 17 (MRLLASVLLALFAVSHA) is a signal peptide. At 18 to 149 (EEGARLLASK…DRRFSPHFLD (132 aa)) the chain is on the lumenal side. 2 N-linked (GlcNAc...) asparagine glycosylation sites follow: Asn88 and Asn104. The chain crosses the membrane as a helical span at residues 150-169 (WAAFGVMTLPSIGIPLLLWY). The Cytoplasmic segment spans residues 170–183 (SSKRKYDTPKSKKN).

The protein belongs to the TRAP-beta family. As to quaternary structure, heterotetramer of TRAP-alpha, TRAP-beta, TRAP-delta and TRAP-gamma. Interacts with STING1.

It localises to the endoplasmic reticulum membrane. TRAP proteins are part of a complex whose function is to bind calcium to the ER membrane and thereby regulate the retention of ER resident proteins. This is Translocon-associated protein subunit beta (SSR2) from Canis lupus familiaris (Dog).